An 89-amino-acid chain; its full sequence is Envelope protein US9 (89 aa).

Residues 1-10 (MTSRPADQDS) are compositionally biased toward basic and acidic residues. A disordered region spans residues 1–21 (MTSRPADQDSVRSSASVPLYP). Over 1–66 (MTSRPADQDS…RRRRTRCVGL (66 aa)) the chain is Intravirion. Residues 20–23 (YPAA) carry the Internalization motif motif. The segment at 29–38 (EAYYSESEDE) is acidic. Phosphoserine; by host CK2 occurs at positions 33 and 35. Residues 67-87 (VIACLVVALLSGGFGALLVWL) form a helical; Signal-anchor for type II membrane protein membrane-spanning segment. At 88–89 (LR) the chain is on the virion surface side.

Belongs to the alphaherpesvirinae envelope protein US9 family. In terms of processing, phosphorylated on serines within the acidic cluster, possibly by host CK2. Phosphorylation determines whether endocytosed viral US9 traffics to the trans-Golgi network or recycles to the cell membrane.

The protein resides in the virion membrane. The protein localises to the host Golgi apparatus membrane. It localises to the host smooth endoplasmic reticulum membrane. Its subcellular location is the host cell membrane. Functionally, essential for the anterograde spread of the infection throughout the host nervous system. Together with the gE/gI heterodimer, US9 is involved in the sorting and transport of viral structural components toward axon tips. This is Envelope protein US9 from Homo sapiens (Human).